A 607-amino-acid polypeptide reads, in one-letter code: Thymidine kinase (607 aa).

Disordered regions lie at residues methionine 1–threonine 160 and aspartate 180–leucine 215. Residues lysine 17–phenylalanine 32 show a composition bias toward basic and acidic residues. Polar residues-rich tracts occupy residues alanine 88–proline 106, arginine 148–threonine 160, and arginine 194–lysine 203. Glycine 291–threonine 298 is an ATP binding site. The active-site Proton acceptor is glutamate 317. A substrate-binding site is contributed by glutamine 355. An ATP-binding site is contributed by arginine 445. Residue arginine 451 coordinates substrate.

It belongs to the herpesviridae thymidine kinase family. In terms of assembly, homodimer.

The protein resides in the virion tegument. It localises to the host nucleus. It carries out the reaction thymidine + ATP = dTMP + ADP + H(+). In terms of biological role, catalyzes the transfer of the gamma-phospho group of ATP to thymidine to generate dTMP in the salvage pathway of pyrimidine synthesis. The dTMP serves as a substrate for DNA polymerase during viral DNA replication. Allows the virus to be reactivated and to grow in non-proliferative cells lacking a high concentration of phosphorylated nucleic acid precursors. The chain is Thymidine kinase from Homo sapiens (Human).